Reading from the N-terminus, the 156-residue chain is ATP synthase subunit b (156 aa).

A helical membrane pass occupies residues 7 to 27 (LFAQIIVFFGLVWFTMKFVWP).

This sequence belongs to the ATPase B chain family. As to quaternary structure, F-type ATPases have 2 components, F(1) - the catalytic core - and F(0) - the membrane proton channel. F(1) has five subunits: alpha(3), beta(3), gamma(1), delta(1), epsilon(1). F(0) has three main subunits: a(1), b(2) and c(10-14). The alpha and beta chains form an alternating ring which encloses part of the gamma chain. F(1) is attached to F(0) by a central stalk formed by the gamma and epsilon chains, while a peripheral stalk is formed by the delta and b chains.

It is found in the cell inner membrane. F(1)F(0) ATP synthase produces ATP from ADP in the presence of a proton or sodium gradient. F-type ATPases consist of two structural domains, F(1) containing the extramembraneous catalytic core and F(0) containing the membrane proton channel, linked together by a central stalk and a peripheral stalk. During catalysis, ATP synthesis in the catalytic domain of F(1) is coupled via a rotary mechanism of the central stalk subunits to proton translocation. Its function is as follows. Component of the F(0) channel, it forms part of the peripheral stalk, linking F(1) to F(0). This chain is ATP synthase subunit b, found in Neisseria gonorrhoeae (strain NCCP11945).